A 103-amino-acid polypeptide reads, in one-letter code: Cell division protein FtsB (103 aa).

Topologically, residues 1-3 (MGK) are cytoplasmic. A helical membrane pass occupies residues 4–21 (LTLLLLALLVWLQYSLWF). Over 22-103 (GKNGIHDYSR…RAATAGQTHR (82 aa)) the chain is Periplasmic. The stretch at 33–62 (NDDVVAQQATNAKLKARNDQLFAEIDDLNG) forms a coiled coil.

This sequence belongs to the FtsB family. As to quaternary structure, part of a complex composed of FtsB, FtsL and FtsQ.

Its subcellular location is the cell inner membrane. Essential cell division protein. May link together the upstream cell division proteins, which are predominantly cytoplasmic, with the downstream cell division proteins, which are predominantly periplasmic. The sequence is that of Cell division protein FtsB from Salmonella agona (strain SL483).